Here is a 513-residue protein sequence, read N- to C-terminus: MQLSTSEISELIKSRLENFSTSAEARTQGTVISVTDGIVRIHGLSNVMAGEMIEFPGNVYGLALNLERDSVGAVILGDYENISEGDTVKCTGRILEVPVGPELVGRVVNALGQPIDGKGPINAKLTDKIEKVAPGVIARKSVSQPVQTGIKAIDSMVPVGRGQRELIIGDRQTGKTAVAVDAIINQKGQNMTCIYVAIGQKASTIANVVRKLEEHGAMEYTIVVAASASDPAALQFLAPYAGCTMGEYFRDRGQDALIVYDDLTKQAWAYRQISLLLRRPPGREAYPGDVFYIHSRLLERAARVNEEYVEKFTNGEVKGKTGSLTALPIIETAAGDVSAFVPTNVISITDGQIFLETDLFNAGIRPAINAGISVSRVGGAAQTKVIKKLGGGVRLALAQYRELAAFAQFASDLDEVTRKQLDRGRLVTELMKQAQYAPLSTSEMAVTLLAANKGFFDDVPVARALAFESALHSFLKSKYKSILDKIDSTNDLGGDDEKALEAAIQDFKATNAY.

169–176 (GDRQTGKT) is a binding site for ATP.

It belongs to the ATPase alpha/beta chains family. In terms of assembly, F-type ATPases have 2 components, CF(1) - the catalytic core - and CF(0) - the membrane proton channel. CF(1) has five subunits: alpha(3), beta(3), gamma(1), delta(1), epsilon(1). CF(0) has three main subunits: a(1), b(2) and c(9-12). The alpha and beta chains form an alternating ring which encloses part of the gamma chain. CF(1) is attached to CF(0) by a central stalk formed by the gamma and epsilon chains, while a peripheral stalk is formed by the delta and b chains.

It localises to the cell inner membrane. It catalyses the reaction ATP + H2O + 4 H(+)(in) = ADP + phosphate + 5 H(+)(out). Functionally, produces ATP from ADP in the presence of a proton gradient across the membrane. The alpha chain is a regulatory subunit. This chain is ATP synthase subunit alpha, found in Methylobacillus flagellatus (strain ATCC 51484 / DSM 6875 / VKM B-1610 / KT).